The sequence spans 125 residues: MAITKEDVLEFISNLSVLELSELVKEFEEKFGVSAAPVMVAGAAVAGAAGGAAEEKTEFDIVLQDGGDKKINVIKVVRALTGLGLKEAKDAVEQTPSVLKEGVSKAEAEEAKKQLEEAGAKVELK.

This sequence belongs to the bacterial ribosomal protein bL12 family. Homodimer. Part of the ribosomal stalk of the 50S ribosomal subunit. Forms a multimeric L10(L12)X complex, where L10 forms an elongated spine to which 2 to 4 L12 dimers bind in a sequential fashion. Binds GTP-bound translation factors.

Forms part of the ribosomal stalk which helps the ribosome interact with GTP-bound translation factors. Is thus essential for accurate translation. In Campylobacter lari (strain RM2100 / D67 / ATCC BAA-1060), this protein is Large ribosomal subunit protein bL12.